We begin with the raw amino-acid sequence, 254 residues long: Very-long-chain (3R)-3-hydroxyacyl-CoA dehydratase 2 (254 aa).

N-acetylalanine is present on Ala-2. The Cytoplasmic portion of the chain corresponds to 2–41; that stretch reads AAVAATAAAKGNGGGGGRAGAGDASGTRKKKGPGPLATAY. The tract at residues 11–33 is disordered; that stretch reads KGNGGGGGRAGAGDASGTRKKKG. Residues 12 to 21 show a composition bias toward gly residues; that stretch reads GNGGGGGRAG. The chain crosses the membrane as a helical span at residues 42–60; sequence LVIYNVVMTAGWLVIAVGL. Residues 61 to 79 lie on the Lumenal side of the membrane; that stretch reads VRAYLAKGSYHSLYYSIEK. The chain crosses the membrane as a helical span at residues 80–97; that stretch reads PLKFFQTGALLEILHCAI. Residues 98–107 are Cytoplasmic-facing; it reads GIVPSSVVLT. Residues 108–125 form a helical membrane-spanning segment; sequence SFQVMSRVFLIWAVTHSV. Topologically, residues 126-130 are lumenal; it reads KEVQS. The helical transmembrane segment at 131-146 threads the bilayer; the sequence is EDSVLLFVIAWTITEI. The Cytoplasmic portion of the chain corresponds to 147-169; that stretch reads IRYSFYTFSLLNHLPYLIKWARY. A helical transmembrane segment spans residues 170–187; sequence TLFIVLYPMGVSGELLTI. Catalysis depends on residues Tyr-176 and Glu-183. The Lumenal portion of the chain corresponds to 188–217; sequence YAALPFVRQAGLYSISLPNKYNFSFDYYAF. Positions 198 to 214 are may be involved in interaction with TECR; that stretch reads GLYSISLPNKYNFSFDY. A glycan (N-linked (GlcNAc...) asparagine) is linked at Asn-209. The helical transmembrane segment at 218–235 threads the bilayer; the sequence is LILIMISYIPIFPQLYFH. The Cytoplasmic segment spans residues 236–254; that stretch reads MIHQRRKILSHTEEHKKFE.

It belongs to the very long-chain fatty acids dehydratase HACD family. In terms of assembly, may interact with enzymes of the ELO family (including ELOVL1); with those enzymes that mediate condensation, the first of the four steps of the reaction cycle responsible for fatty acids elongation, may be part of a larger fatty acids elongase complex. Interacts with BCAP31. Interacts (via the third lumenal loop) with TECR. As to expression, highly expressed in testis, spleen, prostate, colon and heart, followed by moderate expression in thymus, ovary, small intestine, peripheral blood leukocytes, liver, skeletal muscle and pancreas. Weakly detected in kidney, placenta, brain and lung.

Its subcellular location is the endoplasmic reticulum membrane. The catalysed reaction is a very-long-chain (3R)-3-hydroxyacyl-CoA = a very-long-chain (2E)-enoyl-CoA + H2O. It carries out the reaction (3R)-hydroxyhexadecanoyl-CoA = (2E)-hexadecenoyl-CoA + H2O. The enzyme catalyses (3R)-hydroxyoctadecanoyl-CoA = (2E)-octadecenoyl-CoA + H2O. It catalyses the reaction (3R)-hydroxyeicosanoyl-CoA = (2E)-eicosenoyl-CoA + H2O. The catalysed reaction is (3R)-hydroxydocosanoyl-CoA = (2E)-docosenoyl-CoA + H2O. It carries out the reaction (3R)-hydroxytetracosanoyl-CoA = (2E)-tetracosenoyl-CoA + H2O. The enzyme catalyses (3R)-hydroxyhexacosanoyl-CoA = (2E)-hexacosenoyl-CoA + H2O. It participates in lipid metabolism; fatty acid biosynthesis. Functionally, catalyzes the third of the very long-chain fatty acids (VLCFA) elongation four-step cycle (condensation, reduction, dehydration, and reduction). This endoplasmic reticulum-elongation process is characterized by the addition of two carbons to the lipid chain through each cycle. This enzyme catalyzes the dehydration of the 3-hydroxyacyl-CoA intermediate into trans-2,3-enoyl-CoA, within each cycle of elongation. Therefore, it participates in the production of various VLCFAs involved in multiple biological processes as precursors of membrane lipids and lipid mediators. This Homo sapiens (Human) protein is Very-long-chain (3R)-3-hydroxyacyl-CoA dehydratase 2.